Consider the following 728-residue polypeptide: Catalase-peroxidase 2 (728 aa).

The segment at residues 91–214 is a cross-link (tryptophyl-tyrosyl-methioninium (Trp-Tyr) (with M-240)); it reads WHAAGTYRTG…LAAVQMGLIY (124 aa). His-92 serves as the catalytic Proton acceptor. A cross-link (tryptophyl-tyrosyl-methioninium (Tyr-Met) (with W-91)) is located at residues 214–240; the sequence is YVNPEGPNGNPDPAKAAVDIRETFARM. His-255 provides a ligand contact to heme b. The tract at residues 338 to 362 is disordered; sequence WKPNGDAGANSIPDPYDPSRRRGPT.

It belongs to the peroxidase family. Peroxidase/catalase subfamily. As to quaternary structure, homodimer or homotetramer. Heme b serves as cofactor. Post-translationally, formation of the three residue Trp-Tyr-Met cross-link is important for the catalase, but not the peroxidase activity of the enzyme.

The catalysed reaction is H2O2 + AH2 = A + 2 H2O. The enzyme catalyses 2 H2O2 = O2 + 2 H2O. Functionally, bifunctional enzyme with both catalase and broad-spectrum peroxidase activity. This Cupriavidus pinatubonensis (strain JMP 134 / LMG 1197) (Cupriavidus necator (strain JMP 134)) protein is Catalase-peroxidase 2.